A 263-amino-acid chain; its full sequence is 5'-nucleotidase SurE (263 aa).

Asp-8, Asp-9, Ser-40, and Asn-93 together coordinate a divalent metal cation.

Belongs to the SurE nucleotidase family. A divalent metal cation is required as a cofactor.

It is found in the cytoplasm. The enzyme catalyses a ribonucleoside 5'-phosphate + H2O = a ribonucleoside + phosphate. Nucleotidase that shows phosphatase activity on nucleoside 5'-monophosphates. The polypeptide is 5'-nucleotidase SurE (Caulobacter vibrioides (strain ATCC 19089 / CIP 103742 / CB 15) (Caulobacter crescentus)).